A 412-amino-acid polypeptide reads, in one-letter code: Gamma-glutamyl phosphate reductase (412 aa).

Belongs to the gamma-glutamyl phosphate reductase family.

Its subcellular location is the cytoplasm. It carries out the reaction L-glutamate 5-semialdehyde + phosphate + NADP(+) = L-glutamyl 5-phosphate + NADPH + H(+). It functions in the pathway amino-acid biosynthesis; L-proline biosynthesis; L-glutamate 5-semialdehyde from L-glutamate: step 2/2. In terms of biological role, catalyzes the NADPH-dependent reduction of L-glutamate 5-phosphate into L-glutamate 5-semialdehyde and phosphate. The product spontaneously undergoes cyclization to form 1-pyrroline-5-carboxylate. The sequence is that of Gamma-glutamyl phosphate reductase from Actinobacillus pleuropneumoniae serotype 7 (strain AP76).